We begin with the raw amino-acid sequence, 722 residues long: Endoglucanase F (722 aa).

The first 29 residues, 1–29 (MSKNFKRVGAVAVAAAMSLSIMATTSINA), serve as a signal peptide directing secretion. The disordered stretch occupies residues 142 to 165 (PEFQDPSKYPSPLDTSQPVGRDPI). Polar residues predominate over residues 154-165 (LDTSQPVGRDPI). The 62-residue stretch at 661-722 (PEKLLGDVNG…LLKKALLSIQ (62 aa)) folds into the Dockerin domain.

Belongs to the glycosyl hydrolase 48 (cellulase L) family.

The enzyme catalyses Endohydrolysis of (1-&gt;4)-beta-D-glucosidic linkages in cellulose, lichenin and cereal beta-D-glucans.. In terms of biological role, probable endoglucanase involved in the degradation of cellulose or related beta-glucans. This chain is Endoglucanase F (celCCF), found in Ruminiclostridium cellulolyticum (strain ATCC 35319 / DSM 5812 / JCM 6584 / H10) (Clostridium cellulolyticum).